The sequence spans 223 residues: Ribose-5-phosphate isomerase A (223 aa).

Residues 29-32 (TGST), 82-85 (DGAD), and 95-98 (KGGG) each bind substrate. The Proton acceptor role is filled by Glu-104. Lys-122 is a substrate binding site.

Belongs to the ribose 5-phosphate isomerase family. In terms of assembly, homodimer.

The enzyme catalyses aldehydo-D-ribose 5-phosphate = D-ribulose 5-phosphate. The protein operates within carbohydrate degradation; pentose phosphate pathway; D-ribose 5-phosphate from D-ribulose 5-phosphate (non-oxidative stage): step 1/1. Its function is as follows. Catalyzes the reversible conversion of ribose-5-phosphate to ribulose 5-phosphate. In Neisseria meningitidis serogroup C / serotype 2a (strain ATCC 700532 / DSM 15464 / FAM18), this protein is Ribose-5-phosphate isomerase A.